A 261-amino-acid polypeptide reads, in one-letter code: Cytochrome c oxidase subunit 3 (261 aa).

Topologically, residues 1 to 15 (MTHQTHAYHMVNPSP) are mitochondrial matrix. Residues 16 to 34 (WPLTGALSALLMTSGLIMW) form a helical membrane-spanning segment. Residues 35–40 (FHFNST) are Mitochondrial intermembrane-facing. Residues 41 to 66 (TLLMLGLTTNMLTMYQWWRDIIREST) form a helical membrane-spanning segment. Over 67 to 72 (FQGHHT) the chain is Mitochondrial matrix. A helical membrane pass occupies residues 73–105 (PSVQKGLRYGMILFIISEVLFFTGFFWAFYHSS). Topologically, residues 106–128 (LAPTPELGGCWPPTGIHPLNPLE) are mitochondrial intermembrane. A helical transmembrane segment spans residues 129–152 (VPLLNTSVLLASGVSITWAHHSLM). Residues 153–155 (EGN) lie on the Mitochondrial matrix side of the membrane. A helical membrane pass occupies residues 156-183 (RNHMLQALFITIALGVYFTLLQASEYYE). Residues 184 to 190 (APFTISD) are Mitochondrial intermembrane-facing. Residues 191–223 (GVYGSTFFVATGFHGLHVIIGSTFLIVCFFRQL) form a helical membrane-spanning segment. Residues 224–232 (KFHFTSNHH) are Mitochondrial matrix-facing. A helical membrane pass occupies residues 233–256 (FGFEAAAWYWHFVDVVWLFLYVSI). Residues 257 to 261 (YWWGS) lie on the Mitochondrial intermembrane side of the membrane.

Belongs to the cytochrome c oxidase subunit 3 family. Component of the cytochrome c oxidase (complex IV, CIV), a multisubunit enzyme composed of 14 subunits. The complex is composed of a catalytic core of 3 subunits MT-CO1, MT-CO2 and MT-CO3, encoded in the mitochondrial DNA, and 11 supernumerary subunits COX4I, COX5A, COX5B, COX6A, COX6B, COX6C, COX7A, COX7B, COX7C, COX8 and NDUFA4, which are encoded in the nuclear genome. The complex exists as a monomer or a dimer and forms supercomplexes (SCs) in the inner mitochondrial membrane with NADH-ubiquinone oxidoreductase (complex I, CI) and ubiquinol-cytochrome c oxidoreductase (cytochrome b-c1 complex, complex III, CIII), resulting in different assemblies (supercomplex SCI(1)III(2)IV(1) and megacomplex MCI(2)III(2)IV(2)).

Its subcellular location is the mitochondrion inner membrane. The enzyme catalyses 4 Fe(II)-[cytochrome c] + O2 + 8 H(+)(in) = 4 Fe(III)-[cytochrome c] + 2 H2O + 4 H(+)(out). Functionally, component of the cytochrome c oxidase, the last enzyme in the mitochondrial electron transport chain which drives oxidative phosphorylation. The respiratory chain contains 3 multisubunit complexes succinate dehydrogenase (complex II, CII), ubiquinol-cytochrome c oxidoreductase (cytochrome b-c1 complex, complex III, CIII) and cytochrome c oxidase (complex IV, CIV), that cooperate to transfer electrons derived from NADH and succinate to molecular oxygen, creating an electrochemical gradient over the inner membrane that drives transmembrane transport and the ATP synthase. Cytochrome c oxidase is the component of the respiratory chain that catalyzes the reduction of oxygen to water. Electrons originating from reduced cytochrome c in the intermembrane space (IMS) are transferred via the dinuclear copper A center (CU(A)) of subunit 2 and heme A of subunit 1 to the active site in subunit 1, a binuclear center (BNC) formed by heme A3 and copper B (CU(B)). The BNC reduces molecular oxygen to 2 water molecules using 4 electrons from cytochrome c in the IMS and 4 protons from the mitochondrial matrix. This chain is Cytochrome c oxidase subunit 3 (MT-CO3), found in Pelea capreolus (Gray rhebok).